Consider the following 493-residue polypeptide: Cobyric acid synthase (493 aa).

In terms of domain architecture, GATase cobBQ-type spans 246-440 (PIDIAVIKMP…IHGVFDGVVF (195 aa)). The active-site Nucleophile is the cysteine 326. Histidine 432 is a catalytic residue.

This sequence belongs to the CobB/CobQ family. CobQ subfamily.

The protein operates within cofactor biosynthesis; adenosylcobalamin biosynthesis. Functionally, catalyzes amidations at positions B, D, E, and G on adenosylcobyrinic A,C-diamide. NH(2) groups are provided by glutamine, and one molecule of ATP is hydrogenolyzed for each amidation. The chain is Cobyric acid synthase from Clostridium botulinum (strain ATCC 19397 / Type A).